The following is a 319-amino-acid chain: Beta-ketoacyl-[acyl-carrier-protein] synthase III (319 aa).

Catalysis depends on residues Cys-113 and His-246. Residues 247-251 (QANIR) form an ACP-binding region. The active site involves Asn-276.

The protein belongs to the thiolase-like superfamily. FabH family. As to quaternary structure, homodimer.

The protein localises to the cytoplasm. It carries out the reaction malonyl-[ACP] + acetyl-CoA + H(+) = 3-oxobutanoyl-[ACP] + CO2 + CoA. It functions in the pathway lipid metabolism; fatty acid biosynthesis. Its function is as follows. Catalyzes the condensation reaction of fatty acid synthesis by the addition to an acyl acceptor of two carbons from malonyl-ACP. Catalyzes the first condensation reaction which initiates fatty acid synthesis and may therefore play a role in governing the total rate of fatty acid production. Possesses both acetoacetyl-ACP synthase and acetyl transacylase activities. Its substrate specificity determines the biosynthesis of branched-chain and/or straight-chain of fatty acids. This Ehrlichia chaffeensis (strain ATCC CRL-10679 / Arkansas) protein is Beta-ketoacyl-[acyl-carrier-protein] synthase III.